The following is a 249-amino-acid chain: 5'-nucleotidase SurE (249 aa).

The a divalent metal cation site is built by aspartate 9, aspartate 10, serine 40, and asparagine 92.

This sequence belongs to the SurE nucleotidase family. A divalent metal cation serves as cofactor.

The protein localises to the cytoplasm. It carries out the reaction a ribonucleoside 5'-phosphate + H2O = a ribonucleoside + phosphate. Functionally, nucleotidase that shows phosphatase activity on nucleoside 5'-monophosphates. The chain is 5'-nucleotidase SurE from Shewanella sp. (strain ANA-3).